We begin with the raw amino-acid sequence, 300 residues long: 11-beta-hydroxysteroid dehydrogenase 1 (300 aa).

Over 1–7 the chain is Cytoplasmic; it reads MAFLKKY. The helical; Signal-anchor for type II membrane protein transmembrane segment at 8-24 threads the bilayer; sequence LLTILMVFLAYYYYSAN. At 25–300 the chain is on the lumenal side; it reads EKFRPEMLQG…SNEKLYGRWA (276 aa). Residues 41 to 67, 92 to 93, and 119 to 123 each bind NADP(+); these read GASKGIGREIAYHLAKMGAHVVVTARS, SM, and NHVLY. A substrate-binding site is contributed by S170. The active-site Proton acceptor is Y183. 183–187 lines the NADP(+) pocket; that stretch reads YSASK. N-linked (GlcNAc...) asparagine glycosylation is present at N207. 218 to 222 provides a ligand contact to NADP(+); that stretch reads IDTET.

It belongs to the short-chain dehydrogenases/reductases (SDR) family. As to quaternary structure, homodimer. In terms of tissue distribution, widely expressed in all peripheral tissues, with highest expression in liver, followed by kidney and lung, and very low expression in heart, lung, spleen, stomach, small intestine, colon, skin, skeletal muscle, and ovary.

It localises to the endoplasmic reticulum membrane. The enzyme catalyses an 11beta-hydroxysteroid + NADP(+) = an 11-oxosteroid + NADPH + H(+). It catalyses the reaction cortisone + NADPH + H(+) = cortisol + NADP(+). The catalysed reaction is corticosterone + NADP(+) = 11-dehydrocorticosterone + NADPH + H(+). It carries out the reaction a 7beta-hydroxysteroid + NADP(+) = a 7-oxosteroid + NADPH + H(+). The enzyme catalyses 7-oxocholesterol + NADPH + H(+) = 7beta-hydroxycholesterol + NADP(+). It catalyses the reaction chenodeoxycholate + NADP(+) = 7-oxolithocholate + NADPH + H(+). The catalysed reaction is 7-oxolithocholate + NADPH + H(+) = ursodeoxycholate + NADP(+). It carries out the reaction glycochenodeoxycholate + NADP(+) = 7-oxoglycolithocholate + NADPH + H(+). The enzyme catalyses taurochenodeoxycholate + NADP(+) = 7-oxotaurolithocholate + NADPH + H(+). It catalyses the reaction tauroursodeoxycholate + NADP(+) = 7-oxotaurolithocholate + NADPH + H(+). The catalysed reaction is glycoursodeoxycholate + NADP(+) = 7-oxoglycolithocholate + NADPH + H(+). It carries out the reaction 7-oxopregnenolone + NADPH + H(+) = 7beta-hydroxypregnenolone + NADP(+). The enzyme catalyses 3beta,7alpha-dihydroxyandrost-5-en-17-one + NADP(+) = 3beta-hydroxy-5-androstene-7,17-dione + NADPH + H(+). It catalyses the reaction 3beta-hydroxy-5-androstene-7,17-dione + NADPH + H(+) = 3beta,7beta-dihydroxyandrost-5-en-17-one + NADP(+). The catalysed reaction is 3beta-hydroxy-5alpha-androstane-7,17-dione + NADPH + H(+) = 3beta,7beta-dihydroxy-5alpha-androstan-17-one + NADP(+). Its function is as follows. Controls the reversible conversion of biologically active glucocorticoids such as cortisone to cortisol, and 11-dehydrocorticosterone to corticosterone in the presence of NADP(H). Participates in the corticosteroid receptor-mediated anti-inflammatory response, as well as metabolic and homeostatic processes. Bidirectional in vitro, predominantly functions as a reductase in vivo, thereby increasing the concentration of active glucocorticoids. It has broad substrate specificity, besides glucocorticoids, it accepts other steroid and sterol substrates. Interconverts 7-oxo- and 7-hydroxy-neurosteroids such as 7-oxopregnenolone and 7beta-hydroxypregnenolone, 7-oxodehydroepiandrosterone (3beta-hydroxy-5-androstene-7,17-dione) and 7beta-hydroxydehydroepiandrosterone (3beta,7beta-dihydroxyandrost-5-en-17-one), among others. Catalyzes the stereo-specific conversion of the major dietary oxysterol, 7-ketocholesterol (7-oxocholesterol), into the more polar 7-beta-hydroxycholesterol metabolite. 7-oxocholesterol is one of the most important oxysterols, it participates in several events such as induction of apoptosis, accumulation in atherosclerotic lesions, lipid peroxidation, and induction of foam cell formation. Mediates the 7-oxo reduction of 7-oxolithocholate mainly to chenodeoxycholate, and to a lesser extent to ursodeoxycholate, both in its free form and when conjugated to glycine or taurine, providing a link between glucocorticoid activation and bile acid metabolism. Catalyzes the synthesis of 7-beta-25-dihydroxycholesterol from 7-oxo-25-hydroxycholesterol in vitro, which acts as a ligand for the G-protein-coupled receptor (GPCR) Epstein-Barr virus-induced gene 2 (EBI2) and may thereby regulate immune cell migration. The chain is 11-beta-hydroxysteroid dehydrogenase 1 (HSD11B1) from Cavia porcellus (Guinea pig).